A 90-amino-acid chain; its full sequence is Small ribosomal subunit protein uS15 (90 aa).

It belongs to the universal ribosomal protein uS15 family. As to quaternary structure, part of the 30S ribosomal subunit. Forms a bridge to the 50S subunit in the 70S ribosome, contacting the 23S rRNA.

Its function is as follows. One of the primary rRNA binding proteins, it binds directly to 16S rRNA where it helps nucleate assembly of the platform of the 30S subunit by binding and bridging several RNA helices of the 16S rRNA. Forms an intersubunit bridge (bridge B4) with the 23S rRNA of the 50S subunit in the ribosome. The protein is Small ribosomal subunit protein uS15 of Tropheryma whipplei (strain TW08/27) (Whipple's bacillus).